The following is a 198-amino-acid chain: Probable minor pilin MMP0709 (198 aa).

Residues 1-5 (MSNRG) constitute a propeptide that is removed on maturation. The short motif at 6–14 (QLSIEMVIL) is the QXSXEXXXL element.

Post-translationally, the N-terminus is probably cleaved by the prepilin peptidase EppA, which recognizes the class III signal sequence.

It is found in the secreted. It localises to the cell surface. Its subcellular location is the fimbrium. This chain is Probable minor pilin MMP0709, found in Methanococcus maripaludis (strain DSM 14266 / JCM 13030 / NBRC 101832 / S2 / LL).